The primary structure comprises 738 residues: DNA repair and recombination protein RAD54-like (738 aa).

Positions 1–31 are disordered; sequence MRRSLAPSQVAKRKQGPDSDDEEDWEPDMEP. A compositionally biased stretch (acidic residues) spans 18-29; it reads DSDDEEDWEPDM. Positions 164–339 constitute a Helicase ATP-binding domain; the sequence is GRRIENSYGC…FSLVHFVNSG (176 aa). 177-184 lines the ATP pocket; sequence DEMGLGKT. Residues 290–293 carry the DEAH box motif; that stretch reads DEGH. In terms of domain architecture, Helicase C-terminal spans 493-647; the sequence is LVLDYILAMT…CVVDEEQDVE (155 aa). Phosphoserine is present on residues S566 and S567.

Homohexamer. Interacts with RAD51. Phosphorylated. Phosphorylations at Ser-566 and Ser-567 allow efficient removal of RAD51 filaments from DNA.

The catalysed reaction is ATP + H2O = ADP + phosphate + H(+). Functionally, plays an essential role in homologous recombination (HR) which is a major pathway for repairing DNA double-strand breaks (DSBs), single-stranded DNA (ssDNA) gaps, and stalled or collapsed replication forks. Acts as a molecular motor during the homology search and guides RAD51 ssDNA along a donor dsDNA thereby changing the homology search from the diffusion-based mechanism to a motor-guided mechanism. Also plays an essential role in RAD51-mediated synaptic complex formation which consists of three strands encased in a protein filament formed once homology is recognized. Once DNA strand exchange occured, dissociates RAD51 from nucleoprotein filaments formed on dsDNA. This chain is DNA repair and recombination protein RAD54-like (rad54l), found in Danio rerio (Zebrafish).